Reading from the N-terminus, the 419-residue chain is NF-kappa-B essential modulator (419 aa).

Residues 1-48 (MSRPPWKSPLCEMVQPSGSPAGDQDMLGEESSLGKPAMLHVPSEQGTP) form a disordered region. The interval 1 to 197 (MSRPPWKSPL…REALEQRHSV (197 aa)) is required for interaction with and ubiquitination by MARCHF2. A phosphoserine; by IKKB mark is found at S31 and S43. The tract at residues 44–111 (EQGTPETFQR…DLVVRLSLEK (68 aa)) is interaction with CHUK/IKBKB. A coiled-coil region spans residues 49 to 353 (ETFQRCLEEN…KTSCQESARI (305 aa)). At S68 the chain carries Phosphoserine. Glycyl lysine isopeptide (Lys-Gly) (interchain with G-Cter in ubiquitin) cross-links involve residues K111, K139, K143, K226, K246, and K264. The interval 150 to 257 (LGELQESQSR…SMVSSERNRG (108 aa)) is interaction with TANK. A ubiquitin-binding (UBAN) region spans residues 242 to 350 (DNHMKSSMVS…SRLKTSCQES (109 aa)). A self-association region spans residues 246-365 (KSSMVSSERN…MRKRHVEVSQ (120 aa)). The interval 251 to 419 (SSERNRGLQL…LQIHVMECIE (169 aa)) is required for interaction with TNFAIP3. Residue K277 forms a Glycyl lysine isopeptide (Lys-Gly) (interchain with G-Cter in SUMO); alternate linkage. K277 participates in a covalent cross-link: Glycyl lysine isopeptide (Lys-Gly) (interchain with G-Cter in ubiquitin); alternate. Residues K283, K285, K292, and K302 each participate in a glycyl lysine isopeptide (Lys-Gly) (interchain with G-Cter in ubiquitin) cross-link. Residue K309 forms a Glycyl lysine isopeptide (Lys-Gly) (interchain with G-Cter in SUMO); alternate linkage. Residue K309 forms a Glycyl lysine isopeptide (Lys-Gly) (interchain with G-Cter in ubiquitin); alternate linkage. Residues K321, K325, and K326 each participate in a glycyl lysine isopeptide (Lys-Gly) (interchain with G-Cter in ubiquitin) cross-link. Residues 322–343 (LAEKKEFLQEQLEQLQREYSRL) form a leucine-zipper region. The tract at residues 356 to 394 (MRKRHVEVSQPPLAPGPAHHSFHLNPSSQRRSPPDEPPK) is disordered. Position 376 is a phosphoserine; by IKKB (S376). The interval 382-419 (SSQRRSPPDEPPKFCCPKCQYQAPDIDTLQIHVMECIE) is interaction with CYLD. The residue at position 387 (S387) is a Phosphoserine. The CCHC NOA-type zinc-finger motif lies at 389–419 (PDEPPKFCCPKCQYQAPDIDTLQIHVMECIE). Position 397 (C397) interacts with Zn(2+). Residue K399 forms a Glycyl lysine isopeptide (Lys-Gly) (interchain with G-Cter in ubiquitin) linkage. C400, H413, and C417 together coordinate Zn(2+).

Homodimer; disulfide-linked. Component of the I-kappa-B-kinase (IKK) core complex consisting of CHUK, IKBKB and IKBKG; probably four alpha/CHUK-beta/IKBKB dimers are associated with four gamma/IKBKG subunits. The IKK core complex seems to associate with regulatory or adapter proteins to form a IKK-signalosome holo-complex. The IKK complex associates with TERF2IP/RAP1, leading to promote IKK-mediated phosphorylation of RELA/p65. Part of a complex composed of NCOA2, NCOA3, CHUK/IKKA, IKBKB, IKBKG and CREBBP. Interacts with COPS3, CYLD, NALP2, TRPC4AP and PIDD1. Interacts with ATM; the complex is exported from the nucleus. Interacts with TRAF6. Interacts with IKBKE. Interacts with TANK; the interaction is enhanced by IKBKE and TBK1. Part of a ternary complex consisting of TANK, IKBKB and IKBKG. Interacts with ZFAND5. Interacts with RIPK2. Interacts with TNIP1 and TNFAIP3; TNIP1 facilitates the TNFAIP3-mediated de-ubiquitination of IKBKG. Interacts with TNFAIP3; the interaction is induced by TNF stimulation and by polyubiquitin. Binds (via UBAN region) polyubiquitin; binds both 'Lys-63'-linked and linear polyubiquitin, with higher affinity for linear ubiquitin. Interacts with NLRP10. Interacts with TANK; this interaction increases in response to DNA damage. Interacts with USP10; this interaction increases in response to DNA damage. Interacts with ZC3H12A; this interaction increases in response to DNA damage. Interacts with IFIT5; the interaction synergizes the recruitment of IKK to MAP3K7 and enhances IKK phosphorylation. Interacts with TRIM29; this interaction induces IKBKG/NEMO ubiquitination and proteolytic degradation. Interacts with TRIM13; this interaction leads to IKBKG/NEMO ubiquitination. Interacts with ARFIP2. Interacts with RIPK1. Interacts with (ubiquitinated) BCL10; interaction with polyubiquitinated BCL10 via both 'Lys-63'-linked and linear ubiquitin is required for TCR-induced NF-kappa-B activation. Interacts with MARCHF2; during the late stages of macrophage viral and bacterial infection; the interaction leads to ubiquitination and degradation of IKBKG/NEMO. In terms of processing, phosphorylation at Ser-68 attenuates aminoterminal homodimerization. Polyubiquitinated on Lys-285 through 'Lys-63'; the ubiquitination is mediated downstream of NOD2 and RIPK2 and probably plays a role in signaling by facilitating interactions with ubiquitin domain-containing proteins and activates the NF-kappa-B pathway. Polyubiquitinated on Lys-399 through 'Lys-63'; the ubiquitination is mediated by BCL10, MALT1 and TRAF6 and probably plays a role in signaling by facilitating interactions with ubiquitin domain-containing proteins and activates the NF-kappa-B pathway. Monoubiquitinated on Lys-277 and Lys-309; promotes nuclear export. Polyubiquitinated through 'Lys-27' by TRIM23; involved in antiviral innate and inflammatory responses. Linear polyubiquitinated on Lys-111, Lys-143, Lys-226, Lys-246, Lys-264, Lys-277, Lys-285, Lys-292, Lys-302, Lys-309 and Lys-326; the head-to-tail polyubiquitination is mediated by the LUBAC complex and plays a key role in NF-kappa-B activation. Deubiquitinated by USP10 in a TANK-dependent and -independent manner, leading to the negative regulation of NF-kappa-B signaling upon DNA damage. Ubiquitinated at Lys-326 by MARCHF2 following bacterial and viral infection which leads to its degradation. Polyubiquitinated via 'Lys-29'-linked ubiquitin; leading to lysosomal degradation. Post-translationally, sumoylated on Lys-277 and Lys-309 with SUMO1. In terms of processing, neddylated by TRIM40, resulting in stabilization of NFKBIA and down-regulation of NF-kappa-B activity.

Its subcellular location is the cytoplasm. The protein localises to the nucleus. In terms of biological role, regulatory subunit of the IKK core complex which phosphorylates inhibitors of NF-kappa-B thus leading to the dissociation of the inhibitor/NF-kappa-B complex and ultimately the degradation of the inhibitor. Its binding to scaffolding polyubiquitin plays a key role in IKK activation by multiple signaling receptor pathways. Can recognize and bind both 'Lys-63'-linked and linear polyubiquitin upon cell stimulation, with a much highr affinity for linear polyubiquitin. Could be implicated in NF-kappa-B-mediated protection from cytokine toxicity. Essential for viral activation of IRF3. Involved in TLR3- and IFIH1-mediated antiviral innate response; this function requires 'Lys-27'-linked polyubiquitination. The sequence is that of NF-kappa-B essential modulator (IKBKG) from Bos taurus (Bovine).